Here is a 502-residue protein sequence, read N- to C-terminus: ATP synthase subunit alpha (502 aa).

169-176 (GDRQTGKT) provides a ligand contact to ATP.

Belongs to the ATPase alpha/beta chains family. F-type ATPases have 2 components, CF(1) - the catalytic core - and CF(0) - the membrane proton channel. CF(1) has five subunits: alpha(3), beta(3), gamma(1), delta(1), epsilon(1). CF(0) has three main subunits: a(1), b(2) and c(9-12). The alpha and beta chains form an alternating ring which encloses part of the gamma chain. CF(1) is attached to CF(0) by a central stalk formed by the gamma and epsilon chains, while a peripheral stalk is formed by the delta and b chains.

It localises to the cell inner membrane. The enzyme catalyses ATP + H2O + 4 H(+)(in) = ADP + phosphate + 5 H(+)(out). Functionally, produces ATP from ADP in the presence of a proton gradient across the membrane. The alpha chain is a regulatory subunit. The sequence is that of ATP synthase subunit alpha from Kosmotoga olearia (strain ATCC BAA-1733 / DSM 21960 / TBF 19.5.1).